Consider the following 218-residue polypeptide: uncharacterized protein (218 aa).

5 consecutive transmembrane segments (helical) span residues 28-48 (ILLF…LSGL), 66-86 (FDIG…WKPL), 92-112 (LGTL…TKIL), 122-142 (MIFC…YLTC), and 173-193 (ISVC…TVLF).

It is found in the cell membrane. This is an uncharacterized protein from Haemophilus influenzae (strain ATCC 51907 / DSM 11121 / KW20 / Rd).